A 102-amino-acid polypeptide reads, in one-letter code: MIKSELVDFVAAKNPYLHRRDAENAVDAVLDEITGALERGERVDIRSFGTFVVRHRPARSGRNPLNGNAVFIEEKWVPFFRAGKEIRDRLNTAEKSQGRGNL.

It belongs to the bacterial histone-like protein family. Heterodimer of an alpha and a beta chain.

This protein is one of the two subunits of integration host factor, a specific DNA-binding protein that functions in genetic recombination as well as in transcriptional and translational control. This Rhizobium radiobacter (Agrobacterium tumefaciens) protein is Integration host factor subunit beta (ihfB).